Reading from the N-terminus, the 278-residue chain is MVWFKRAIPSIRTKDKRDTPEGLWSKCDSCGAALHKKQLEDHLYTCPHCGFHFRISPDLYFSFLFDDGKWEEFDAQLRAADPLKFVDTKPYPERVRSTMQKSGKSEACRNATGKLGGSDAVISGMDFGFIGGSMGSVVGEKIARAADKSVELNAPLIVISQSGGARMMEGAFSLMQMAKTSARLTRLGERGIPFISLMTDPTMGGISASFAMLGDLNISEPKALIGFAGPRVIRDTIKRDLPEGFQRAEFLQKHGFVDTIVHRKDLRAQLIKLLGHMK.

In terms of domain architecture, CoA carboxyltransferase N-terminal spans 23-278 (LWSKCDSCGA…QLIKLLGHMK (256 aa)). Zn(2+) contacts are provided by C27, C30, C46, and C49. The segment at 27–49 (CDSCGAALHKKQLEDHLYTCPHC) adopts a C4-type zinc-finger fold.

It belongs to the AccD/PCCB family. In terms of assembly, acetyl-CoA carboxylase is a heterohexamer composed of biotin carboxyl carrier protein (AccB), biotin carboxylase (AccC) and two subunits each of ACCase subunit alpha (AccA) and ACCase subunit beta (AccD). Zn(2+) serves as cofactor.

The protein localises to the cytoplasm. It carries out the reaction N(6)-carboxybiotinyl-L-lysyl-[protein] + acetyl-CoA = N(6)-biotinyl-L-lysyl-[protein] + malonyl-CoA. It participates in lipid metabolism; malonyl-CoA biosynthesis; malonyl-CoA from acetyl-CoA: step 1/1. In terms of biological role, component of the acetyl coenzyme A carboxylase (ACC) complex. Biotin carboxylase (BC) catalyzes the carboxylation of biotin on its carrier protein (BCCP) and then the CO(2) group is transferred by the transcarboxylase to acetyl-CoA to form malonyl-CoA. The polypeptide is Acetyl-coenzyme A carboxylase carboxyl transferase subunit beta (Chlorobaculum tepidum (strain ATCC 49652 / DSM 12025 / NBRC 103806 / TLS) (Chlorobium tepidum)).